A 696-amino-acid chain; its full sequence is Polyribonucleotide nucleotidyltransferase (696 aa).

Asp489 and Asp495 together coordinate Mg(2+). The 60-residue stretch at 556-615 (PQYVTMKINPEKIRDVIGKGGVVIREITEATNCAIDISDDGTIKIAAHTTEEGEAAKRRI) folds into the KH domain. An S1 motif domain is found at 625 to 693 (GKVYEGTVVK…RQGRVRLSMK (69 aa)).

It belongs to the polyribonucleotide nucleotidyltransferase family. In terms of assembly, component of the RNA degradosome, which is a multiprotein complex involved in RNA processing and mRNA degradation. Mg(2+) serves as cofactor.

The protein resides in the cytoplasm. The enzyme catalyses RNA(n+1) + phosphate = RNA(n) + a ribonucleoside 5'-diphosphate. Involved in mRNA degradation. Catalyzes the phosphorolysis of single-stranded polyribonucleotides processively in the 3'- to 5'-direction. The protein is Polyribonucleotide nucleotidyltransferase of Coxiella burnetii (strain CbuK_Q154) (Coxiella burnetii (strain Q154)).